The primary structure comprises 119 residues: UPF0102 protein Pmen_0910 (119 aa).

It belongs to the UPF0102 family.

This chain is UPF0102 protein Pmen_0910, found in Ectopseudomonas mendocina (strain ymp) (Pseudomonas mendocina).